The sequence spans 189 residues: Transcription factor FapR (189 aa).

Belongs to the FapR family.

Transcriptional factor involved in regulation of membrane lipid biosynthesis by repressing genes involved in fatty acid and phospholipid metabolism. The sequence is that of Transcription factor FapR from Listeria monocytogenes serotype 4b (strain CLIP80459).